We begin with the raw amino-acid sequence, 544 residues long: Chaperonin GroEL (544 aa).

Residues 29-32 (TLGP), K50, 86-90 (DGTTT), G413, 479-481 (DAA), and D495 each bind ATP.

It belongs to the chaperonin (HSP60) family. Forms a cylinder of 14 subunits composed of two heptameric rings stacked back-to-back. Interacts with the co-chaperonin GroES.

It is found in the cytoplasm. It carries out the reaction ATP + H2O + a folded polypeptide = ADP + phosphate + an unfolded polypeptide.. Its function is as follows. Together with its co-chaperonin GroES, plays an essential role in assisting protein folding. The GroEL-GroES system forms a nano-cage that allows encapsulation of the non-native substrate proteins and provides a physical environment optimized to promote and accelerate protein folding. The chain is Chaperonin GroEL from Borrelia duttonii (strain Ly).